The sequence spans 169 residues: Crossover junction endodeoxyribonuclease RuvC (169 aa).

Catalysis depends on residues Asp15, Glu75, and Asp147. Mg(2+) is bound by residues Asp15, Glu75, and Asp147.

Belongs to the RuvC family. As to quaternary structure, homodimer which binds Holliday junction (HJ) DNA. The HJ becomes 2-fold symmetrical on binding to RuvC with unstacked arms; it has a different conformation from HJ DNA in complex with RuvA. In the full resolvosome a probable DNA-RuvA(4)-RuvB(12)-RuvC(2) complex forms which resolves the HJ. The cofactor is Mg(2+).

It is found in the cytoplasm. The catalysed reaction is Endonucleolytic cleavage at a junction such as a reciprocal single-stranded crossover between two homologous DNA duplexes (Holliday junction).. Functionally, the RuvA-RuvB-RuvC complex processes Holliday junction (HJ) DNA during genetic recombination and DNA repair. Endonuclease that resolves HJ intermediates. Cleaves cruciform DNA by making single-stranded nicks across the HJ at symmetrical positions within the homologous arms, yielding a 5'-phosphate and a 3'-hydroxyl group; requires a central core of homology in the junction. The consensus cleavage sequence is 5'-(A/T)TT(C/G)-3'. Cleavage occurs on the 3'-side of the TT dinucleotide at the point of strand exchange. HJ branch migration catalyzed by RuvA-RuvB allows RuvC to scan DNA until it finds its consensus sequence, where it cleaves and resolves the cruciform DNA. The chain is Crossover junction endodeoxyribonuclease RuvC from Caulobacter vibrioides (strain ATCC 19089 / CIP 103742 / CB 15) (Caulobacter crescentus).